The sequence spans 224 residues: Large ribosomal subunit protein uL1 (224 aa).

Belongs to the universal ribosomal protein uL1 family. In terms of assembly, part of the 50S ribosomal subunit.

Binds directly to 23S rRNA. The L1 stalk is quite mobile in the ribosome, and is involved in E site tRNA release. In terms of biological role, protein L1 is also a translational repressor protein, it controls the translation of the L11 operon by binding to its mRNA. The sequence is that of Large ribosomal subunit protein uL1 from Borrelia hermsii (strain HS1 / DAH).